Reading from the N-terminus, the 68-residue chain is Gallinacin-10 (68 aa).

The N-terminal stretch at 1-19 (MKILCLLFAVLLFLFQAAP) is a signal peptide. A propeptide spanning residues 20-25 (GSADPL) is cleaved from the precursor. 3 disulfides stabilise this stretch: cysteine 32/cysteine 61, cysteine 39/cysteine 54, and cysteine 44/cysteine 62.

The protein belongs to the beta-defensin family. As to expression, strong expression in the testis, liver, gall bladder and kidney. Also expressed in the ovary and male and female reproductive tracts. Expressed in the ovarian stroma and the theca and granulosa layers of the ovarian follicle.

The protein localises to the secreted. It is found in the cytoplasmic granule. Its function is as follows. Has bactericidal activity. This Gallus gallus (Chicken) protein is Gallinacin-10 (GAL10).